The following is a 263-amino-acid chain: Adaptin ear-binding coat-associated protein 2 (263 aa).

2 disordered regions span residues 167-191 (KKEG…LPPP) and 209-263 (GGSL…WVQF). Serine 181 is modified (phosphoserine). 2 consecutive short sequence motifs (WXXF motif) follow at residues 218–221 (GSGG) and 238–241 (DIWG). Low complexity predominate over residues 246 to 263 (STGSPSSQSQPGTGWVQF).

Belongs to the NECAP family. As to quaternary structure, interacts with AP1G1 and AP2A1 components of the adapter protein complexes AP-1 and AP-2. Interacts with the GAE domain proteins GGA1, GGA2 and GGA3. Expressed in brain, heart, kidney, liver and lung (at protein level).

It is found in the cytoplasmic vesicle. The protein localises to the clathrin-coated vesicle membrane. It localises to the cell membrane. Functionally, involved in endocytosis. The protein is Adaptin ear-binding coat-associated protein 2 (Necap2) of Rattus norvegicus (Rat).